A 261-amino-acid polypeptide reads, in one-letter code: uncharacterized protein (261 aa).

One can recognise a Response regulatory domain in the interval 7-122; it reads TAVLADDEPL…RLASCCEKLQ (116 aa). D54 bears the 4-aspartylphosphate mark. An HTH LytTR-type domain is found at 157 to 261; sequence LKASKGEEIH…RALQHLFKVS (105 aa).

This is an uncharacterized protein from Vibrio cholerae serotype O1 (strain ATCC 39315 / El Tor Inaba N16961).